The following is a 547-amino-acid chain: Inositol 1,4,5-trisphosphate receptor-interacting protein-like 1 (547 aa).

Residues 1–16 (MAVISLLFLAVMYVVH) form the signal peptide. At 17-96 (HPLMVSDRMD…PFQASGQDGG (80 aa)) the chain is on the extracellular side. Positions 28–66 (DTLARSRQLEKRMSEEMRQLEIEFEERSRAAEEKQKAEN) form a coiled coil. A helical membrane pass occupies residues 97–117 (PLGWMLGNLWNAGLFCLFLIF). Residues 118–547 (ELLRQNMQHE…LPCSPLAGGL (430 aa)) lie on the Cytoplasmic side of the membrane.

Belongs to the ITPRIP family.

Its subcellular location is the cell membrane. Functionally, functions as a ligand of CD3E, inhibiting TCR-CD3 complex signaling to regulate T cell activation. Induces stable CD3E-NCK1 binding, thereby preventing the CD3E-ZAP70 interaction and subsequently inhibiting the activation of the downstream ERK-NFkB signaling cascade and calcium influx. This chain is Inositol 1,4,5-trisphosphate receptor-interacting protein-like 1 (Itpripl1), found in Rattus norvegicus (Rat).